Reading from the N-terminus, the 305-residue chain is DNA-directed RNA polymerase 35 kDa subunit (305 aa).

Belongs to the poxviridae DNA-directed RNA polymerase 35 kDa subunit family. As to quaternary structure, the DNA-dependent RNA polymerase used for intermediate and late genes expression consists of eight subunits 147 kDa, 133 kDa, 35 kDa, 30 kDa, 22 kDa, 19 kDa, 18 kDa and 7 kDa totalling more than 500 kDa in mass. The same holoenzyme, with the addition of the transcription-specificity factor RAP94, is used for early gene expression.

The protein resides in the virion. The catalysed reaction is RNA(n) + a ribonucleoside 5'-triphosphate = RNA(n+1) + diphosphate. In terms of biological role, part of the DNA-dependent RNA polymerase which catalyzes the transcription of viral DNA into RNA using the four ribonucleoside triphosphates as substrates. Responsible for the transcription of early, intermediate and late genes. DNA-dependent RNA polymerase associates with the early transcription factor (ETF), itself composed of D6 and A7, thereby allowing the early genes transcription. Late transcription, and probably also intermediate transcription, require newly synthesized RNA polymerase. The sequence is that of DNA-directed RNA polymerase 35 kDa subunit (OPG156) from Bos taurus (Bovine).